The primary structure comprises 488 residues: Malonate-semialdehyde dehydrogenase 1 (488 aa).

NAD(+) contacts are provided by Phe-156, Lys-180, Glu-183, Arg-184, Ser-233, and Ser-255. The active-site Nucleophile is the Cys-288. Glu-387 is a binding site for NAD(+).

Belongs to the aldehyde dehydrogenase family. IolA subfamily. In terms of assembly, homotetramer.

It catalyses the reaction 3-oxopropanoate + NAD(+) + CoA + H2O = hydrogencarbonate + acetyl-CoA + NADH + H(+). The catalysed reaction is 2-methyl-3-oxopropanoate + NAD(+) + CoA + H2O = propanoyl-CoA + hydrogencarbonate + NADH + H(+). Its pathway is polyol metabolism; myo-inositol degradation into acetyl-CoA; acetyl-CoA from myo-inositol: step 7/7. Its function is as follows. Catalyzes the oxidation of malonate semialdehyde (MSA) and methylmalonate semialdehyde (MMSA) into acetyl-CoA and propanoyl-CoA, respectively. Is involved in a myo-inositol catabolic pathway. Bicarbonate, and not CO2, is the end-product of the enzymatic reaction. This chain is Malonate-semialdehyde dehydrogenase 1, found in Geobacillus kaustophilus (strain HTA426).